Here is a 296-residue protein sequence, read N- to C-terminus: UDP-N-acetylenolpyruvoylglucosamine reductase (296 aa).

The 172-residue stretch at 18–189 (LGGRALAEVR…TGADIVLRRG (172 aa)) folds into the FAD-binding PCMH-type domain. R166 is a catalytic residue. C218 serves as the catalytic Proton donor. E289 is a catalytic residue.

The protein belongs to the MurB family. The cofactor is FAD.

The protein localises to the cytoplasm. It carries out the reaction UDP-N-acetyl-alpha-D-muramate + NADP(+) = UDP-N-acetyl-3-O-(1-carboxyvinyl)-alpha-D-glucosamine + NADPH + H(+). The protein operates within cell wall biogenesis; peptidoglycan biosynthesis. Cell wall formation. The polypeptide is UDP-N-acetylenolpyruvoylglucosamine reductase (Nitratidesulfovibrio vulgaris (strain ATCC 29579 / DSM 644 / CCUG 34227 / NCIMB 8303 / VKM B-1760 / Hildenborough) (Desulfovibrio vulgaris)).